A 437-amino-acid polypeptide reads, in one-letter code: Amino-acid acetyltransferase (437 aa).

One can recognise an N-acetyltransferase domain in the interval 289–429 (ENIRLATSFD…EHYNYQRMSK (141 aa)).

It belongs to the acetyltransferase family. ArgA subfamily.

Its subcellular location is the cytoplasm. The catalysed reaction is L-glutamate + acetyl-CoA = N-acetyl-L-glutamate + CoA + H(+). It participates in amino-acid biosynthesis; L-arginine biosynthesis; N(2)-acetyl-L-ornithine from L-glutamate: step 1/4. In Actinobacillus pleuropneumoniae serotype 7 (strain AP76), this protein is Amino-acid acetyltransferase.